The sequence spans 67 residues: ATP synthase F(0) complex subunit 8 (67 aa).

Residues 8 to 24 (TWFITIVSMLLSLFILM) traverse the membrane as a helical segment. Residue Lys-54 is modified to N6-acetyllysine; alternate. Lys-54 is subject to N6-succinyllysine; alternate. Residue Lys-57 is modified to N6-acetyllysine.

It belongs to the ATPase protein 8 family. As to quaternary structure, component of the ATP synthase complex composed at least of ATP5F1A/subunit alpha, ATP5F1B/subunit beta, ATP5MC1/subunit c (homooctomer), MT-ATP6/subunit a, MT-ATP8/subunit 8, ATP5ME/subunit e, ATP5MF/subunit f, ATP5MG/subunit g, ATP5MK/subunit k, ATP5MJ/subunit j, ATP5F1C/subunit gamma, ATP5F1D/subunit delta, ATP5F1E/subunit epsilon, ATP5PF/subunit F6, ATP5PB/subunit b, ATP5PD/subunit d, ATP5PO/subunit OSCP. ATP synthase complex consists of a soluble F(1) head domain (subunits alpha(3) and beta(3)) - the catalytic core - and a membrane F(0) domain - the membrane proton channel (subunits c, a, 8, e, f, g, k and j). These two domains are linked by a central stalk (subunits gamma, delta, and epsilon) rotating inside the F1 region and a stationary peripheral stalk (subunits F6, b, d, and OSCP). Interacts with PRICKLE3.

Its subcellular location is the mitochondrion membrane. In terms of biological role, subunit 8, of the mitochondrial membrane ATP synthase complex (F(1)F(0) ATP synthase or Complex V) that produces ATP from ADP in the presence of a proton gradient across the membrane which is generated by electron transport complexes of the respiratory chain. ATP synthase complex consist of a soluble F(1) head domain - the catalytic core - and a membrane F(1) domain - the membrane proton channel. These two domains are linked by a central stalk rotating inside the F(1) region and a stationary peripheral stalk. During catalysis, ATP synthesis in the catalytic domain of F(1) is coupled via a rotary mechanism of the central stalk subunits to proton translocation. In vivo, can only synthesize ATP although its ATP hydrolase activity can be activated artificially in vitro. Part of the complex F(0) domain. In Dasypus novemcinctus (Nine-banded armadillo), this protein is ATP synthase F(0) complex subunit 8.